The sequence spans 927 residues: DNA-binding protein RFX6 (927 aa).

Disordered regions lie at residues 1–21 (MAKV…PQLP) and 81–108 (NFSS…QKKS). Positions 123–198 (TLQWLEDNYI…YHYYGIGIKE (76 aa)) form a DNA-binding region, RFX-type winged-helix.

It belongs to the RFX family. Interacts with RFX3. In terms of tissue distribution, in the adult pancreas, expression is restricted to the islets where it could be detected in all endocrine lineages.

It is found in the nucleus. Its function is as follows. Transcription factor required to direct islet cell differentiation during endocrine pancreas development. Specifically required for the differentiation of 4 of the 5 islet cell types and for the production of insulin. Not required for pancreatic PP (polypeptide-producing) cells differentiation. Acts downstream of NEUROG3 and regulates the transcription factors involved in beta-cell maturation and function, thereby restricting the expression of the beta-cell differentiation and specification genes, and thus the beta-cell fate choice. Activates transcription by forming a heterodimer with RFX3 and binding to the X-box in the promoter of target genes. Involved in glucose-stimulated insulin secretion by promoting insulin and L-type calcium channel gene transcription. The protein is DNA-binding protein RFX6 (Rfx6) of Mus musculus (Mouse).